The primary structure comprises 65 residues: Large ribosomal subunit protein uL29 (65 aa).

It belongs to the universal ribosomal protein uL29 family.

The polypeptide is Large ribosomal subunit protein uL29 (Buchnera aphidicola subsp. Acyrthosiphon pisum (strain 5A)).